The following is a 258-amino-acid chain: Probable pectin methylesterase CGR3 (258 aa).

The Cytoplasmic portion of the chain corresponds to 1–29 (MSRRQVRRVGDSGSFPFVGALHSKSRSSP). A helical transmembrane segment spans residues 30–50 (LLSVCLVLVGACLLIGYAYSG). At 51–258 (PGMFKSIREV…CQVFHLKPLH (208 aa)) the chain is on the lumenal side. Asparagine 171 carries an N-linked (GlcNAc...) asparagine glycan.

It belongs to the class I-like SAM-binding methyltransferase superfamily.

Its subcellular location is the golgi apparatus membrane. Together with CGR2, required for homogalacturonan pectins (HG) methylesterification in the Golgi apparatus prior to integration into cell walls, essential for general growth and development. Promotes petiole elongation. Impacts photosynthesis and respiration efficiency by influencing leaf mesophyll morphology and physiology; pectin methylesterification modulates both expansion and positioning of cells in leaves, probably by changing cell walls plasticity. This chain is Probable pectin methylesterase CGR3, found in Arabidopsis thaliana (Mouse-ear cress).